Here is a 182-residue protein sequence, read N- to C-terminus: Transcription termination/antitermination protein NusG (182 aa).

Positions 131–163 (VGEQVRIQSGPFANQIGEVQEIEADKFKLTVLV) constitute a KOW domain.

Belongs to the NusG family.

In terms of biological role, participates in transcription elongation, termination and antitermination. This is Transcription termination/antitermination protein NusG from Staphylococcus epidermidis (strain ATCC 35984 / DSM 28319 / BCRC 17069 / CCUG 31568 / BM 3577 / RP62A).